Here is a 204-residue protein sequence, read N- to C-terminus: Thymidylate kinase (204 aa).

11 to 18 is an ATP binding site; that stretch reads GLDKSGKT.

Belongs to the thymidylate kinase family.

The enzyme catalyses dTMP + ATP = dTDP + ADP. Its pathway is pyrimidine metabolism; dTTP biosynthesis. This chain is Thymidylate kinase (TMK), found in Cowpox virus (strain GRI-90 / Grishak) (CPV).